We begin with the raw amino-acid sequence, 182 residues long: MQTEHVILLNAQGVPTGTLEKYAAHTADTLLHLAFSSWLFNAKGQLLVTRRALSKKAWPGVWTNSVCGHPQLGESNEEAVIRRCRYELGVEITPPESIYPDFRYRATDPNGIVENEVCPVFAARTTSALQINDDEVMDYQWCDLAAVLRGIDATPWAFSPWMVMQATNREARKRLSAFTQLK.

The Mn(2+) site is built by histidine 25 and histidine 32. The Nudix hydrolase domain maps to 30 to 164 (LLHLAFSSWL…PWAFSPWMVM (135 aa)). The active site involves cysteine 67. Mn(2+) is bound at residue histidine 69. Glutamate 87 contributes to the Mg(2+) binding site. Glutamate 114 and glutamate 116 together coordinate Mn(2+). Glutamate 116 is a catalytic residue.

Belongs to the IPP isomerase type 1 family. Homodimer. The cofactor is Mg(2+). Mn(2+) is required as a cofactor.

It is found in the cytoplasm. It catalyses the reaction isopentenyl diphosphate = dimethylallyl diphosphate. Its pathway is isoprenoid biosynthesis; dimethylallyl diphosphate biosynthesis; dimethylallyl diphosphate from isopentenyl diphosphate: step 1/1. In terms of biological role, catalyzes the 1,3-allylic rearrangement of the homoallylic substrate isopentenyl (IPP) to its highly electrophilic allylic isomer, dimethylallyl diphosphate (DMAPP). The polypeptide is Isopentenyl-diphosphate Delta-isomerase (Escherichia coli O45:K1 (strain S88 / ExPEC)).